The primary structure comprises 1935 residues: Myosin heavy chain, fast skeletal muscle (1935 aa).

The region spanning 32–81 (DAKTAFFVVDPDEMYLKGTLVSKEGGKATVKTHSGKTVTVKEDEIFPMNP) is the Myosin N-terminal SH3-like domain. A Myosin motor domain is found at 85–779 (DKIEDMAMMT…LLGALEEMRD (695 aa)). Lys-129 carries the post-translational modification N6,N6,N6-trimethyllysine. An ATP-binding site is contributed by 178-185 (GESGAGKT). 2 actin-binding regions span residues 659 to 681 (LMTN…ESKT) and 761 to 775 (HTKV…GALE). The IQ domain maps to 782–811 (LALLVTMTQALCRGYVMRKEFVKMMERRES). Residues 812-839 (IYSIQYNIRSFMNVKHWPWMKLYFKIKP) form a hinge region. A coiled-coil region spans residues 840 to 1935 (LLKSAETEKE…RDAGKSKDEE (1096 aa)). 2 disordered regions span residues 1589-1608 (RNSQ…EVRS) and 1902-1935 (HELE…KDEE). The segment covering 1592 to 1603 (QRVIDSMQSTLD) has biased composition (polar residues). Basic and acidic residues-rich tracts occupy residues 1902-1913 (HELEEAQERADV) and 1924-1935 (KSRDAGKSKDEE).

This sequence belongs to the TRAFAC class myosin-kinesin ATPase superfamily. Myosin family. In terms of assembly, muscle myosin is a hexameric protein that consists of 2 heavy chain subunits (MHC), 2 alkali light chain subunits (MLC) and 2 regulatory light chain subunits (MLC-2).

The protein resides in the cytoplasm. It localises to the myofibril. Muscle contraction. This chain is Myosin heavy chain, fast skeletal muscle, found in Cyprinus carpio (Common carp).